A 63-amino-acid polypeptide reads, in one-letter code: Large ribosomal subunit protein bL28 (63 aa).

It belongs to the bacterial ribosomal protein bL28 family.

This Kosmotoga olearia (strain ATCC BAA-1733 / DSM 21960 / TBF 19.5.1) protein is Large ribosomal subunit protein bL28.